The sequence spans 255 residues: Protein C activator (255 aa).

Residues 1–18 (MVLIRVLANLLILHLSYA) form the signal peptide. A propeptide spanning residues 19–24 (QKSSEL) is cleaved from the precursor. Positions 25 to 246 (VIGGDECNIN…YTDWIQSIIS (222 aa)) constitute a Peptidase S1 domain. 6 disulfide bridges follow: C31/C162, C49/C65, C97/C253, C141/C207, C173/C186, and C197/C222. N45 carries N-linked (GlcNAc...) asparagine glycosylation. The active-site Charge relay system is H64. Residue N102 is glycosylated (N-linked (GlcNAc...) asparagine). The Charge relay system role is filled by D109. N153 carries an N-linked (GlcNAc...) asparagine glycan. Residue S201 is the Charge relay system of the active site.

Belongs to the peptidase S1 family. Snake venom subfamily. As to quaternary structure, monomer. Expressed by the venom gland.

It localises to the secreted. In terms of biological role, snake venom serine protease that selectively cleaves the heavy chain of protein C (PROC). This activation is thrombomodulin-independent. This Agkistrodon piscivorus leucostoma (Western cottonmouth) protein is Protein C activator.